A 109-amino-acid polypeptide reads, in one-letter code: Small ribosomal subunit protein bS6 (109 aa).

Belongs to the bacterial ribosomal protein bS6 family.

In terms of biological role, binds together with bS18 to 16S ribosomal RNA. This Ehrlichia ruminantium (strain Gardel) protein is Small ribosomal subunit protein bS6.